The chain runs to 123 residues: Large ribosomal subunit protein uL14 (123 aa).

The protein belongs to the universal ribosomal protein uL14 family. As to quaternary structure, part of the 50S ribosomal subunit. Forms a cluster with proteins L3 and L19. In the 70S ribosome, L14 and L19 interact and together make contacts with the 16S rRNA in bridges B5 and B8.

Functionally, binds to 23S rRNA. Forms part of two intersubunit bridges in the 70S ribosome. The sequence is that of Large ribosomal subunit protein uL14 from Chromohalobacter salexigens (strain ATCC BAA-138 / DSM 3043 / CIP 106854 / NCIMB 13768 / 1H11).